A 226-amino-acid polypeptide reads, in one-letter code: Methylamine utilization ferredoxin-type protein MauM (226 aa).

4Fe-4S ferredoxin-type domains are found at residues 59 to 87 (PEPEFNAACIRCGLCVEACPLDILHLASW), 95 to 127 (TPYFVGRTDPCRMCPDIPCARACPTGALSPLLT), 136 to 172 (VAVLVGHETCLNYKGLTCSICVRVCPIIGEAISLKQI), and 180 to 211 (QIPTVDSSKCTGCGTCEKHCVLSEAAIRLLPR). [4Fe-4S] cluster contacts are provided by Cys-67, Cys-70, Cys-73, Cys-77, Cys-105, Cys-108, Cys-113, Cys-117, Cys-145, Cys-153, Cys-156, Cys-160, Cys-189, Cys-192, Cys-195, and Cys-199.

It functions in the pathway one-carbon metabolism; methylamine degradation. In terms of biological role, involved in electron transfer. The polypeptide is Methylamine utilization ferredoxin-type protein MauM (mauM) (Methylophilus methylotrophus (Bacterium W3A1)).